We begin with the raw amino-acid sequence, 96 residues long: Accessory cholera enterotoxin (96 aa).

Residues 76-96 form a helical membrane-spanning segment; sequence QALAIVLQALMTRFALRALNL.

Its subcellular location is the secreted. The protein localises to the host cell membrane. Its function is as follows. Increases short-circuit current in rabbit ileal tissue mounted in Ussing chambers, by increasing the potential difference. Cultures of V.cholerae containing the cloned ace gene cause fluid secretion in ligated rabbit ileal loops. This Vibrio cholerae serotype O1 (strain ATCC 39315 / El Tor Inaba N16961) protein is Accessory cholera enterotoxin (ace).